The following is a 193-amino-acid chain: dTTP/UTP pyrophosphatase (193 aa).

Residue aspartate 77 is the Proton acceptor of the active site.

Belongs to the Maf family. YhdE subfamily. Requires a divalent metal cation as cofactor.

The protein resides in the cytoplasm. It carries out the reaction dTTP + H2O = dTMP + diphosphate + H(+). The enzyme catalyses UTP + H2O = UMP + diphosphate + H(+). In terms of biological role, nucleoside triphosphate pyrophosphatase that hydrolyzes dTTP and UTP. May have a dual role in cell division arrest and in preventing the incorporation of modified nucleotides into cellular nucleic acids. The sequence is that of dTTP/UTP pyrophosphatase from Bacteroides fragilis (strain YCH46).